Consider the following 352-residue polypeptide: Phosphoribosylformylglycinamidine cyclo-ligase (352 aa).

The protein belongs to the AIR synthase family.

The protein localises to the cytoplasm. The catalysed reaction is 2-formamido-N(1)-(5-O-phospho-beta-D-ribosyl)acetamidine + ATP = 5-amino-1-(5-phospho-beta-D-ribosyl)imidazole + ADP + phosphate + H(+). It functions in the pathway purine metabolism; IMP biosynthesis via de novo pathway; 5-amino-1-(5-phospho-D-ribosyl)imidazole from N(2)-formyl-N(1)-(5-phospho-D-ribosyl)glycinamide: step 2/2. The chain is Phosphoribosylformylglycinamidine cyclo-ligase from Pseudomonas syringae pv. tomato (strain ATCC BAA-871 / DC3000).